The primary structure comprises 121 residues: Large ribosomal subunit protein uL18 (121 aa).

The interval M1–L25 is disordered. The segment covering I13–G23 has biased composition (basic residues).

The protein belongs to the universal ribosomal protein uL18 family. As to quaternary structure, part of the 50S ribosomal subunit; part of the 5S rRNA/L5/L18/L25 subcomplex. Contacts the 5S and 23S rRNAs.

Its function is as follows. This is one of the proteins that bind and probably mediate the attachment of the 5S RNA into the large ribosomal subunit, where it forms part of the central protuberance. This Streptococcus pyogenes serotype M28 (strain MGAS6180) protein is Large ribosomal subunit protein uL18.